The sequence spans 399 residues: MAKEKYERTKPHVNIGTIGHVDHGKTTLTAAISKVLHEEFPDVNPEYDFNQIDSAPEEAARGITINIAHIEYQTEKRHYAHVDCPGHADFVKNMITGAAQMDGAILVVAATDGPMAQTREHVLLARQVGVPKILVALNKCDMVDDEELIELVEEEVRDLLDENGFDRDCPVIHTSAYGALHDDAPDHEKWVQSVKDLMAAVDDYIPTPVHDLDKPFLMPIEDVFTISGRGTVVTGRVERGQLAVNTPVEIVGIRPTQTTTVTSIETFHKTMDACEAGDNTGLLLRGLGREDVERGQVVAKPGSVTPHTKFEGEVYVLTKDEGGRHSPFFSNYRPQFYFRTTDVTGVIELPEGVEMVQPGDHATFTVELIQPIAMEEGLTFAVREGGHTVGSGRVTKILA.

The tr-type G domain occupies 10 to 209; sequence KPHVNIGTIG…AVDDYIPTPV (200 aa). The G1 stretch occupies residues 19 to 26; that stretch reads GHVDHGKT. Residue 19–26 coordinates GTP; the sequence is GHVDHGKT. Thr26 lines the Mg(2+) pocket. The tract at residues 62 to 66 is G2; sequence GITIN. Positions 83 to 86 are G3; sequence DCPG. GTP-binding positions include 83–87 and 138–141; these read DCPGH and NKCD. Residues 138-141 form a G4 region; that stretch reads NKCD. The G5 stretch occupies residues 175 to 177; the sequence is SAY.

Belongs to the TRAFAC class translation factor GTPase superfamily. Classic translation factor GTPase family. EF-Tu/EF-1A subfamily. In terms of assembly, monomer.

It localises to the cytoplasm. It catalyses the reaction GTP + H2O = GDP + phosphate + H(+). GTP hydrolase that promotes the GTP-dependent binding of aminoacyl-tRNA to the A-site of ribosomes during protein biosynthesis. The sequence is that of Elongation factor Tu from Bifidobacterium longum subsp. infantis (strain ATCC 15697 / DSM 20088 / JCM 1222 / NCTC 11817 / S12).